A 392-amino-acid chain; its full sequence is Phosphopentomutase (392 aa).

Mn(2+) contacts are provided by aspartate 14, aspartate 286, histidine 291, aspartate 327, histidine 328, and histidine 339.

Belongs to the phosphopentomutase family. Mn(2+) serves as cofactor.

The protein resides in the cytoplasm. It carries out the reaction 2-deoxy-alpha-D-ribose 1-phosphate = 2-deoxy-D-ribose 5-phosphate. The enzyme catalyses alpha-D-ribose 1-phosphate = D-ribose 5-phosphate. The protein operates within carbohydrate degradation; 2-deoxy-D-ribose 1-phosphate degradation; D-glyceraldehyde 3-phosphate and acetaldehyde from 2-deoxy-alpha-D-ribose 1-phosphate: step 1/2. Functionally, isomerase that catalyzes the conversion of deoxy-ribose 1-phosphate (dRib-1-P) and ribose 1-phosphate (Rib-1-P) to deoxy-ribose 5-phosphate (dRib-5-P) and ribose 5-phosphate (Rib-5-P), respectively. This is Phosphopentomutase from Staphylococcus aureus (strain Mu3 / ATCC 700698).